The sequence spans 270 residues: Glutamate racemase (270 aa).

Substrate contacts are provided by residues 14–15 (DS) and 46–47 (YG). The active-site Proton donor/acceptor is C77. 78 to 79 (NT) is a binding site for substrate. C189 acts as the Proton donor/acceptor in catalysis. Position 190-191 (190-191 (TH)) interacts with substrate.

The protein belongs to the aspartate/glutamate racemases family.

It catalyses the reaction L-glutamate = D-glutamate. It functions in the pathway cell wall biogenesis; peptidoglycan biosynthesis. Its function is as follows. Provides the (R)-glutamate required for cell wall biosynthesis. This chain is Glutamate racemase, found in Neisseria meningitidis serogroup C.